The chain runs to 559 residues: Protochlorophyllide-dependent translocon component 52, chloroplastic (559 aa).

The transit peptide at 1 to 55 (MEAALAACALPSLRILNTKPRFRCSFSNPSLPISPNSLITRKSSRFTTAVSSPPS) directs the protein to the chloroplast. Residues 44 to 70 (SRFTTAVSSPPSSSAATSTNSPPEPEA) form a disordered region. A compositionally biased stretch (low complexity) spans 47 to 64 (TTAVSSPPSSSAATSTNS). The Rieske domain maps to 85-195 (WYPVMPICDL…STVQHEIIWF (111 aa)). [2Fe-2S] cluster-binding residues include cysteine 127, histidine 129, cysteine 147, and histidine 150. Positions 248 and 253 each coordinate Fe cation. The short motif at 483 to 486 (CSSC) is the Redox-active motif element. A run of 2 helical transmembrane segments spans residues 493 to 513 (LNALEVILQIASVAMIGVMAV) and 525 to 545 (IAVLVAAVLSFAASKWLSHFI).

[2Fe-2S] cluster serves as cofactor.

Its subcellular location is the plastid. The protein localises to the chloroplast inner membrane. It carries out the reaction protochlorophyllide a + 4 reduced [2Fe-2S]-[ferredoxin] + 2 O2 + 5 H(+) = protochlorophyllide b + 4 oxidized [2Fe-2S]-[ferredoxin] + 3 H2O. With respect to regulation, down-regulated by light. Part of a translocon most abundantly expressed in etiolated plants and involved in the protochlorophyllide-dependent import of the precursor NADPH:protochlorophyllide oxidoreductase A (pPORA). In Arabidopsis thaliana (Mouse-ear cress), this protein is Protochlorophyllide-dependent translocon component 52, chloroplastic.